The sequence spans 345 residues: MKFIDEAIIKVQAGAGGHGCLSFRREKFIPFGGPDGGDGGNGGSIYLIADKNINTLVDFRHQHHFRARRGENGRGRLQTGKSSEDIYIPVPLGTEAWEAETGELLGDLTRPGQTLLVAKGGAHGLGNARFKSSTNRAPRKTTQGKPGEERTLRLELKLLADVGLLGLPNAGKSTFIRQVSAATPKVADYPFTTLHPHLGVVRIDSNRSFVAADIPGLIEGAAQGAGLGVRFLKHLSRTRLLLHFVDVAPLEPTLSPVDSVRAIHRELQQFSPELAAQEQWLVFNKTDLISSSERASRCQEIIREICWQKPVYEISALTGEGCQRLIHAVMQYLEEVSPYEKEDSQ.

The Obg domain occupies 1-159 (MKFIDEAIIK…RTLRLELKLL (159 aa)). Positions 127-148 (NARFKSSTNRAPRKTTQGKPGE) are disordered. The span at 130–144 (FKSSTNRAPRKTTQG) shows a compositional bias: polar residues. One can recognise an OBG-type G domain in the interval 160–334 (ADVGLLGLPN…LIHAVMQYLE (175 aa)). GTP contacts are provided by residues 166–173 (GLPNAGKS), 191–195 (FTTLH), 213–216 (DIPG), 284–287 (NKTD), and 315–317 (SAL). Mg(2+) contacts are provided by serine 173 and threonine 193.

This sequence belongs to the TRAFAC class OBG-HflX-like GTPase superfamily. OBG GTPase family. In terms of assembly, monomer. Requires Mg(2+) as cofactor.

The protein resides in the cytoplasm. Its function is as follows. An essential GTPase which binds GTP, GDP and possibly (p)ppGpp with moderate affinity, with high nucleotide exchange rates and a fairly low GTP hydrolysis rate. Plays a role in control of the cell cycle, stress response, ribosome biogenesis and in those bacteria that undergo differentiation, in morphogenesis control. The polypeptide is GTPase Obg (Nitrosococcus oceani (strain ATCC 19707 / BCRC 17464 / JCM 30415 / NCIMB 11848 / C-107)).